Reading from the N-terminus, the 271-residue chain is 3-methyl-2-oxobutanoate hydroxymethyltransferase (271 aa).

Mg(2+) contacts are provided by Asp51 and Asp90. 3-methyl-2-oxobutanoate is bound by residues 51-52 (DS), Asp90, and Lys118. Residue Glu120 coordinates Mg(2+). Catalysis depends on Glu186, which acts as the Proton acceptor.

This sequence belongs to the PanB family. In terms of assembly, homodecamer; pentamer of dimers. Requires Mg(2+) as cofactor.

The protein localises to the cytoplasm. It carries out the reaction 3-methyl-2-oxobutanoate + (6R)-5,10-methylene-5,6,7,8-tetrahydrofolate + H2O = 2-dehydropantoate + (6S)-5,6,7,8-tetrahydrofolate. It functions in the pathway cofactor biosynthesis; (R)-pantothenate biosynthesis; (R)-pantoate from 3-methyl-2-oxobutanoate: step 1/2. Functionally, catalyzes the reversible reaction in which hydroxymethyl group from 5,10-methylenetetrahydrofolate is transferred onto alpha-ketoisovalerate to form ketopantoate. The protein is 3-methyl-2-oxobutanoate hydroxymethyltransferase of Xanthomonas axonopodis pv. citri (strain 306).